The primary structure comprises 126 residues: Fluoride-specific ion channel FluC (126 aa).

4 helical membrane passes run 5 to 25 (GFVAVGVGAAVGAWLRWFFSV), 36 to 56 (YGTLASNLVGGYLIGLAVAFF), 69 to 89 (LAVTGFLGGLTTFSTFSSEVI), and 99 to 119 (WAMLHLAMHLGGSLLLTAFGI). Residues Gly-76 and Thr-79 each contribute to the Na(+) site.

The protein belongs to the fluoride channel Fluc/FEX (TC 1.A.43) family.

It is found in the cell inner membrane. The catalysed reaction is fluoride(in) = fluoride(out). Its activity is regulated as follows. Na(+) is not transported, but it plays an essential structural role and its presence is essential for fluoride channel function. Functionally, fluoride-specific ion channel. Important for reducing fluoride concentration in the cell, thus reducing its toxicity. The protein is Fluoride-specific ion channel FluC of Cupriavidus metallidurans (strain ATCC 43123 / DSM 2839 / NBRC 102507 / CH34) (Ralstonia metallidurans).